Here is a 261-residue protein sequence, read N- to C-terminus: Cytochrome c oxidase subunit 3 (261 aa).

At Met1–Pro15 the chain is on the mitochondrial matrix side. Residues Trp16 to Trp34 form a helical membrane-spanning segment. Topologically, residues Phe35–Thr40 are mitochondrial intermembrane. Residues Thr41–Thr66 form a helical membrane-spanning segment. Residues Phe67–Thr72 are Mitochondrial matrix-facing. The chain crosses the membrane as a helical span at residues Pro73 to Ser105. Residues Leu106–Glu128 lie on the Mitochondrial intermembrane side of the membrane. Residues Val129–Met152 traverse the membrane as a helical segment. Residues Glu153–Glu155 are Mitochondrial matrix-facing. A helical transmembrane segment spans residues Arg156–Asp183. The Mitochondrial intermembrane portion of the chain corresponds to Ala184–Asp190. The helical transmembrane segment at Gly191–Ile223 threads the bilayer. The Mitochondrial matrix segment spans residues Arg224–His232. Residues Phe233–Ile256 form a helical membrane-spanning segment. The Mitochondrial intermembrane portion of the chain corresponds to Tyr257–Ser261.

It belongs to the cytochrome c oxidase subunit 3 family. Component of the cytochrome c oxidase (complex IV, CIV), a multisubunit enzyme composed of 14 subunits. The complex is composed of a catalytic core of 3 subunits MT-CO1, MT-CO2 and MT-CO3, encoded in the mitochondrial DNA, and 11 supernumerary subunits COX4I, COX5A, COX5B, COX6A, COX6B, COX6C, COX7A, COX7B, COX7C, COX8 and NDUFA4, which are encoded in the nuclear genome. The complex exists as a monomer or a dimer and forms supercomplexes (SCs) in the inner mitochondrial membrane with NADH-ubiquinone oxidoreductase (complex I, CI) and ubiquinol-cytochrome c oxidoreductase (cytochrome b-c1 complex, complex III, CIII), resulting in different assemblies (supercomplex SCI(1)III(2)IV(1) and megacomplex MCI(2)III(2)IV(2)).

It is found in the mitochondrion inner membrane. It catalyses the reaction 4 Fe(II)-[cytochrome c] + O2 + 8 H(+)(in) = 4 Fe(III)-[cytochrome c] + 2 H2O + 4 H(+)(out). Functionally, component of the cytochrome c oxidase, the last enzyme in the mitochondrial electron transport chain which drives oxidative phosphorylation. The respiratory chain contains 3 multisubunit complexes succinate dehydrogenase (complex II, CII), ubiquinol-cytochrome c oxidoreductase (cytochrome b-c1 complex, complex III, CIII) and cytochrome c oxidase (complex IV, CIV), that cooperate to transfer electrons derived from NADH and succinate to molecular oxygen, creating an electrochemical gradient over the inner membrane that drives transmembrane transport and the ATP synthase. Cytochrome c oxidase is the component of the respiratory chain that catalyzes the reduction of oxygen to water. Electrons originating from reduced cytochrome c in the intermembrane space (IMS) are transferred via the dinuclear copper A center (CU(A)) of subunit 2 and heme A of subunit 1 to the active site in subunit 1, a binuclear center (BNC) formed by heme A3 and copper B (CU(B)). The BNC reduces molecular oxygen to 2 water molecules using 4 electrons from cytochrome c in the IMS and 4 protons from the mitochondrial matrix. The polypeptide is Cytochrome c oxidase subunit 3 (mt-co3) (Gadus morhua (Atlantic cod)).